The sequence spans 164 residues: Pyruvoyl-dependent arginine decarboxylase (164 aa).

A Pyruvic acid (Ser) modification is found at Ser52.

The protein belongs to the PdaD family. Requires pyruvate as cofactor.

The enzyme catalyses L-arginine + H(+) = agmatine + CO2. This chain is Pyruvoyl-dependent arginine decarboxylase, found in Methanococcus maripaludis (strain C7 / ATCC BAA-1331).